A 177-amino-acid chain; its full sequence is ATP-dependent protease subunit HslV (177 aa).

Residue threonine 7 is part of the active site. The Na(+) site is built by alanine 162, cysteine 165, and threonine 168.

Belongs to the peptidase T1B family. HslV subfamily. As to quaternary structure, a double ring-shaped homohexamer of HslV is capped on each side by a ring-shaped HslU homohexamer. The assembly of the HslU/HslV complex is dependent on binding of ATP.

It is found in the cytoplasm. It catalyses the reaction ATP-dependent cleavage of peptide bonds with broad specificity.. With respect to regulation, allosterically activated by HslU binding. Functionally, protease subunit of a proteasome-like degradation complex believed to be a general protein degrading machinery. The polypeptide is ATP-dependent protease subunit HslV (Leptospira biflexa serovar Patoc (strain Patoc 1 / Ames)).